Here is a 205-residue protein sequence, read N- to C-terminus: Heme-binding protein 2 (205 aa).

Positions 1-39 are disordered; sequence MAEPLQPDPGAAEDAAAQAVETPGWKAPEDAGPQPGSYE. Alanine 2 bears the N-acetylalanine mark. Serine 181 is subject to Phosphoserine.

It belongs to the HEBP family. Monomer. Interacts with LRPPRC. May interact with BCL2L1; an interaction with BCL2L1 was observed using a peptide, but not with the full-length protein. The full-length protein would have to undergo a major conformation change for the interaction to occur. Interacts with PDCD6. Detected in placenta.

It is found in the cytoplasm. The protein localises to the mitochondrion. Functionally, can promote mitochondrial permeability transition and facilitate necrotic cell death under different types of stress conditions. This Homo sapiens (Human) protein is Heme-binding protein 2 (HEBP2).